The primary structure comprises 293 residues: MGSRAELCTLLGGFSFLLLLIPGEGAKGGSLRESQGVCSKQTLVVPLHYNESYSQPVYKPYLTLCAGRRICSTYRTMYRVMWREVRREVQQTHAVCCQGWKKRHPGALTCEAICAKPCLNGGVCVRPDQCECAPGWGGKHCHVDVDECRTSITLCSHHCFNTAGSFTCGCPHDLVLGVDGRTCMEGSPEPPTSASILSVAVREAEKDERALKQEIHELRGRLERLEQWAGQAGAWVRAVLPVPPEELQPEQVAELWGRGDRIESLSDQVLLLEERLGACSCEDNSLGLGVNHR.

A signal peptide spans 1–25 (MGSRAELCTLLGGFSFLLLLIPGEG). The 79-residue stretch at 34–112 (SQGVCSKQTL…RHPGALTCEA (79 aa)) folds into the EMI domain. 9 disulfide bridges follow: Cys38–Cys97, Cys65–Cys71, Cys96–Cys110, Cys114–Cys124, Cys118–Cys130, Cys132–Cys141, Cys148–Cys159, Cys155–Cys168, and Cys170–Cys183. N-linked (GlcNAc...) asparagine glycosylation occurs at Asn50. The EGF-like 1 domain maps to 111–142 (EAICAKPCLNGGVCVRPDQCECAPGWGGKHCH). Residues 144 to 184 (DVDECRTSITLCSHHCFNTAGSFTCGCPHDLVLGVDGRTCM) enclose the EGF-like 2; calcium-binding domain. The stretch at 195–232 (SILSVAVREAEKDERALKQEIHELRGRLERLEQWAGQA) forms a coiled coil.

The protein resides in the secreted. This chain is Epidermal growth factor-like protein 8 (EGFL8), found in Homo sapiens (Human).